The primary structure comprises 147 residues: MIAVVQRVTKSSVEVDGKVVGEIRKGVNILLGVAEDDTEEDINKLVNKIVYLRMFEDEDKKMNYSLLDINGEALIISQFTLLANLKKGRRPSFEYAAKPDKAKALYEKFVEEFSKYVKVQTGIFGADMKVYILNDGPVTFILDSKQL.

The Gly-cisPro motif, important for rejection of L-amino acids signature appears at 136 to 137; the sequence is GP.

The protein belongs to the DTD family. In terms of assembly, homodimer.

Its subcellular location is the cytoplasm. The catalysed reaction is glycyl-tRNA(Ala) + H2O = tRNA(Ala) + glycine + H(+). The enzyme catalyses a D-aminoacyl-tRNA + H2O = a tRNA + a D-alpha-amino acid + H(+). In terms of biological role, an aminoacyl-tRNA editing enzyme that deacylates mischarged D-aminoacyl-tRNAs. Also deacylates mischarged glycyl-tRNA(Ala), protecting cells against glycine mischarging by AlaRS. Acts via tRNA-based rather than protein-based catalysis; rejects L-amino acids rather than detecting D-amino acids in the active site. By recycling D-aminoacyl-tRNA to D-amino acids and free tRNA molecules, this enzyme counteracts the toxicity associated with the formation of D-aminoacyl-tRNA entities in vivo and helps enforce protein L-homochirality. In Sulfurihydrogenibium sp. (strain YO3AOP1), this protein is D-aminoacyl-tRNA deacylase.